The following is a 740-amino-acid chain: Glycerol dehydrogenase large subunit (740 aa).

Residues 1–29 (MRRPYLLATAAGLALACSPLIAHAQFAPA) form the signal peptide. Disordered regions lie at residues 28-105 (PAGA…GDWV) and 442-468 (LPVE…PWSV). Residues 34–43 (EPSSSVPGPG) show a composition bias toward low complexity. A compositionally biased stretch (polar residues) spans 46-58 (SEPTENSPKSQSY).

Belongs to the bacterial PQQ dehydrogenase family. Pyrroloquinoline quinone is required as a cofactor.

It localises to the secreted. The catalysed reaction is glycerol + A = dihydroxyacetone + AH2. Functionally, catalyzes the oxidation of glycerol to glycerone. Also acts, more slowly, on a number of other polyols including D-sorbitol, D-arabinitol, D-mannitol, meso-erythritol, adonitol and propylene glycol. This is Glycerol dehydrogenase large subunit (sldA) from Gluconobacter thailandicus.